The primary structure comprises 332 residues: Small ribosomal subunit biogenesis GTPase RsgA (332 aa).

The CP-type G domain maps to 103–259 (RQQLIAANLD…LIDTPGMREL (157 aa)). GTP is bound by residues 148–151 (TKVD) and 201–209 (GSSGAGKST). 4 residues coordinate Zn(2+): cysteine 281, cysteine 286, histidine 288, and cysteine 294.

This sequence belongs to the TRAFAC class YlqF/YawG GTPase family. RsgA subfamily. In terms of assembly, monomer. Associates with 30S ribosomal subunit, binds 16S rRNA. Zn(2+) is required as a cofactor.

It localises to the cytoplasm. Functionally, one of several proteins that assist in the late maturation steps of the functional core of the 30S ribosomal subunit. Helps release RbfA from mature subunits. May play a role in the assembly of ribosomal proteins into the subunit. Circularly permuted GTPase that catalyzes slow GTP hydrolysis, GTPase activity is stimulated by the 30S ribosomal subunit. The sequence is that of Small ribosomal subunit biogenesis GTPase RsgA from Xylella fastidiosa (strain M23).